We begin with the raw amino-acid sequence, 388 residues long: Ferrochelatase (388 aa).

2 residues coordinate Fe cation: histidine 196 and glutamate 277.

The protein belongs to the ferrochelatase family.

Its subcellular location is the cytoplasm. It catalyses the reaction heme b + 2 H(+) = protoporphyrin IX + Fe(2+). The protein operates within porphyrin-containing compound metabolism; protoheme biosynthesis; protoheme from protoporphyrin-IX: step 1/1. Its function is as follows. Catalyzes the ferrous insertion into protoporphyrin IX. This chain is Ferrochelatase, found in Nostoc sp. (strain PCC 7120 / SAG 25.82 / UTEX 2576).